The sequence spans 172 residues: Peptidyl-prolyl cis-trans isomerase (172 aa).

The PPIase cyclophilin-type domain maps to 7 to 170; sequence FFDMSVGGQP…KKVVVEDCGQ (164 aa).

The protein belongs to the cyclophilin-type PPIase family. Not glycosylated. In terms of tissue distribution, expressed in pollen.

It localises to the cytoplasm. It carries out the reaction [protein]-peptidylproline (omega=180) = [protein]-peptidylproline (omega=0). With respect to regulation, binds cyclosporin A (CsA). CsA mediates some of its effects via an inhibitory action on PPIase. PPIases accelerate the folding of proteins. It catalyzes the cis-trans isomerization of proline imidic peptide bonds in oligopeptides. The polypeptide is Peptidyl-prolyl cis-trans isomerase (PCKR1) (Catharanthus roseus (Madagascar periwinkle)).